The primary structure comprises 325 residues: Hydroxymethylglutaryl-CoA lyase, mitochondrial (325 aa).

The N-terminal 27 residues, 1 to 27 (MATVKKVLPRRLVGLATLRAVSTSSVG), are a transit peptide targeting the mitochondrion. The region spanning 33 to 300 (VKIVEVGPRD…HTGVNLQKLL (268 aa)) is the Pyruvate carboxyltransferase domain. Arginine 41 lines the substrate pocket. Aspartate 42 lines the a divalent metal cation pocket. Residue lysine 48 is modified to N6-acetyllysine; alternate. Lysine 48 carries the post-translational modification N6-succinyllysine; alternate. Lysine 111 is subject to N6-acetyllysine. Residues lysine 137 and lysine 179 each carry the N6-acetyllysine; alternate modification. 2 positions are modified to N6-succinyllysine; alternate: lysine 137 and lysine 179. A divalent metal cation contacts are provided by histidine 233 and histidine 235. Cysteine 266 is a catalytic residue. Asparagine 275 provides a ligand contact to a divalent metal cation. Residues 323–325 (CKL) carry the Microbody targeting signal motif. At lysine 324 the chain carries N6-acetyllysine.

This sequence belongs to the HMG-CoA lyase family. In terms of assembly, homodimer; disulfide-linked. Can also form homotetramers.

It localises to the mitochondrion matrix. The protein resides in the peroxisome. It catalyses the reaction (3S)-3-hydroxy-3-methylglutaryl-CoA = acetoacetate + acetyl-CoA. It functions in the pathway metabolic intermediate metabolism; (S)-3-hydroxy-3-methylglutaryl-CoA degradation; acetoacetate from (S)-3-hydroxy-3-methylglutaryl-CoA: step 1/1. Its function is as follows. Mitochondrial 3-hydroxy-3-methylglutaryl-CoA lyase that catalyzes a cation-dependent cleavage of (S)-3-hydroxy-3-methylglutaryl-CoA into acetyl-CoA and acetoacetate, a key step in ketogenesis. Terminal step in leucine catabolism. Ketone bodies (beta-hydroxybutyrate, acetoacetate and acetone) are essential as an alternative source of energy to glucose, as lipid precursors and as regulators of metabolism. The protein is Hydroxymethylglutaryl-CoA lyase, mitochondrial (HMGCL) of Bos taurus (Bovine).